We begin with the raw amino-acid sequence, 227 residues long: Cytochrome c oxidase subunit 2 (227 aa).

At 1–26 (MATWSNFNLQNSASPLMEQIIFFHDH) the chain is on the mitochondrial intermembrane side. A helical transmembrane segment spans residues 27-51 (TLVILIMITILVGYLMISLFFNSYI). Residues 52–62 (NRFLLEGQMIE) are Mitochondrial matrix-facing. A helical transmembrane segment spans residues 63–81 (LIWTILPAITLIFIALPSL). At 82-227 (RLLYLLDELN…NFINWINNYS (146 aa)) the chain is on the mitochondrial intermembrane side. Residues H161, C196, E198, C200, H204, and M207 each contribute to the Cu cation site. E198 contacts Mg(2+).

The protein belongs to the cytochrome c oxidase subunit 2 family. In terms of assembly, component of the cytochrome c oxidase (complex IV, CIV), a multisubunit enzyme composed of a catalytic core of 3 subunits and several supernumerary subunits. The complex exists as a monomer or a dimer and forms supercomplexes (SCs) in the inner mitochondrial membrane with ubiquinol-cytochrome c oxidoreductase (cytochrome b-c1 complex, complex III, CIII). Cu cation serves as cofactor.

It localises to the mitochondrion inner membrane. It carries out the reaction 4 Fe(II)-[cytochrome c] + O2 + 8 H(+)(in) = 4 Fe(III)-[cytochrome c] + 2 H2O + 4 H(+)(out). Component of the cytochrome c oxidase, the last enzyme in the mitochondrial electron transport chain which drives oxidative phosphorylation. The respiratory chain contains 3 multisubunit complexes succinate dehydrogenase (complex II, CII), ubiquinol-cytochrome c oxidoreductase (cytochrome b-c1 complex, complex III, CIII) and cytochrome c oxidase (complex IV, CIV), that cooperate to transfer electrons derived from NADH and succinate to molecular oxygen, creating an electrochemical gradient over the inner membrane that drives transmembrane transport and the ATP synthase. Cytochrome c oxidase is the component of the respiratory chain that catalyzes the reduction of oxygen to water. Electrons originating from reduced cytochrome c in the intermembrane space (IMS) are transferred via the dinuclear copper A center (CU(A)) of subunit 2 and heme A of subunit 1 to the active site in subunit 1, a binuclear center (BNC) formed by heme A3 and copper B (CU(B)). The BNC reduces molecular oxygen to 2 water molecules using 4 electrons from cytochrome c in the IMS and 4 protons from the mitochondrial matrix. The polypeptide is Cytochrome c oxidase subunit 2 (COII) (Choristoneura fumiferana (Spruce budworm moth)).